Reading from the N-terminus, the 70-residue chain is ATP synthase subunit c (70 aa).

A run of 2 helical transmembrane segments spans residues 4-24 (IAAGIALCGSAIGAGIGNGML) and 48-68 (ISMALVEAMPIIVIAMSFVLI).

Belongs to the ATPase C chain family. As to quaternary structure, F-type ATPases have 2 components, F(1) - the catalytic core - and F(0) - the membrane proton channel. F(1) has five subunits: alpha(3), beta(3), gamma(1), delta(1), epsilon(1). F(0) has three main subunits: a(1), b(2) and c(10-14). The alpha and beta chains form an alternating ring which encloses part of the gamma chain. F(1) is attached to F(0) by a central stalk formed by the gamma and epsilon chains, while a peripheral stalk is formed by the delta and b chains.

The protein localises to the cell membrane. F(1)F(0) ATP synthase produces ATP from ADP in the presence of a proton or sodium gradient. F-type ATPases consist of two structural domains, F(1) containing the extramembraneous catalytic core and F(0) containing the membrane proton channel, linked together by a central stalk and a peripheral stalk. During catalysis, ATP synthesis in the catalytic domain of F(1) is coupled via a rotary mechanism of the central stalk subunits to proton translocation. Its function is as follows. Key component of the F(0) channel; it plays a direct role in translocation across the membrane. A homomeric c-ring of between 10-14 subunits forms the central stalk rotor element with the F(1) delta and epsilon subunits. The sequence is that of ATP synthase subunit c from Oenococcus oeni (strain ATCC BAA-331 / PSU-1).